A 203-amino-acid chain; its full sequence is Guanylate kinase (203 aa).

The Guanylate kinase-like domain maps to 3–181 (GSLFIVAAPS…AHTDLRAIVQ (179 aa)). Residue 10–17 (APSGAGKT) coordinates ATP.

The protein belongs to the guanylate kinase family.

The protein resides in the cytoplasm. The catalysed reaction is GMP + ATP = GDP + ADP. Its function is as follows. Essential for recycling GMP and indirectly, cGMP. The polypeptide is Guanylate kinase (Nitrosococcus oceani (strain ATCC 19707 / BCRC 17464 / JCM 30415 / NCIMB 11848 / C-107)).